The primary structure comprises 448 residues: uncharacterized protein (448 aa).

In terms of tissue distribution, component of the acid-insoluble and acid-soluble organic matrix of the aragonitic skeleton (at protein level).

Its subcellular location is the secreted. This is an uncharacterized protein from Acropora millepora (Staghorn coral).